Here is a 251-residue protein sequence, read N- to C-terminus: Triosephosphate isomerase (251 aa).

9–11 (NWK) provides a ligand contact to substrate. Catalysis depends on histidine 95, which acts as the Electrophile. Glutamate 167 acts as the Proton acceptor in catalysis. Residues glycine 173, serine 213, and 234–235 (GG) each bind substrate.

The protein belongs to the triosephosphate isomerase family. As to quaternary structure, homodimer.

It is found in the cytoplasm. It carries out the reaction D-glyceraldehyde 3-phosphate = dihydroxyacetone phosphate. It participates in carbohydrate biosynthesis; gluconeogenesis. It functions in the pathway carbohydrate degradation; glycolysis; D-glyceraldehyde 3-phosphate from glycerone phosphate: step 1/1. Functionally, involved in the gluconeogenesis. Catalyzes stereospecifically the conversion of dihydroxyacetone phosphate (DHAP) to D-glyceraldehyde-3-phosphate (G3P). The sequence is that of Triosephosphate isomerase from Ligilactobacillus salivarius (strain UCC118) (Lactobacillus salivarius).